Here is a 360-residue protein sequence, read N- to C-terminus: Peptide chain release factor 1 (360 aa).

At glutamine 235 the chain carries N5-methylglutamine. Over residues 284–293 (QKRQQEEAST) the composition is skewed to basic and acidic residues. The interval 284–305 (QKRQQEEASTRRNLLGSGDRSD) is disordered.

Belongs to the prokaryotic/mitochondrial release factor family. Post-translationally, methylated by PrmC. Methylation increases the termination efficiency of RF1.

It localises to the cytoplasm. Peptide chain release factor 1 directs the termination of translation in response to the peptide chain termination codons UAG and UAA. The chain is Peptide chain release factor 1 from Pectobacterium carotovorum subsp. carotovorum (strain PC1).